The following is a 278-amino-acid chain: HTH-type transcriptional activator RhaS (278 aa).

One can recognise an HTH araC/xylS-type domain in the interval 174–272; sequence NLLLAWLEDH…NWSPRDIRQG (99 aa). 2 DNA-binding regions (H-T-H motif) span residues 191-212 and 239-262; these read DAVA…KQKT and VTDI…RREF.

Binds DNA as a dimer.

It localises to the cytoplasm. Its function is as follows. Activates expression of the rhaBAD and rhaT operons. In Escherichia coli O45:K1 (strain S88 / ExPEC), this protein is HTH-type transcriptional activator RhaS.